The sequence spans 373 residues: Probable quinol oxidase subunit 2 (373 aa).

The N-terminal stretch at 1–19 (MSKFKSLLLLFGSLILLSG) is a signal peptide. The N-palmitoyl cysteine moiety is linked to residue cysteine 20. Cysteine 20 is lipidated: S-diacylglycerol cysteine. A run of 2 helical transmembrane segments spans residues 38 to 58 (FLIMYSIIFMLVIIAAVLILF) and 82 to 102 (LETIWFIIPVIIVIALAIPTV). 2 stretches are compositionally biased toward basic and acidic residues: residues 292 to 320 (EERTADVLDKPDQPARKPEITNANYERHG) and 339 to 373 (EESHNMDEMEKISEGAKDEKASKIEKKDHENGGGH). The segment at 292 to 373 (EERTADVLDK…KKDHENGGGH (82 aa)) is disordered.

The protein belongs to the cytochrome c oxidase subunit 2 family.

It localises to the cell membrane. The enzyme catalyses 2 a quinol + O2 = 2 a quinone + 2 H2O. In terms of biological role, catalyzes quinol oxidation with the concomitant reduction of oxygen to water. Subunit II transfers the electrons from a quinol to the binuclear center of the catalytic subunit I. In Staphylococcus saprophyticus subsp. saprophyticus (strain ATCC 15305 / DSM 20229 / NCIMB 8711 / NCTC 7292 / S-41), this protein is Probable quinol oxidase subunit 2 (qoxA).